Consider the following 257-residue polypeptide: ADP-dependent (S)-NAD(P)H-hydrate dehydratase (257 aa).

The YjeF C-terminal domain occupies Met1 to Arg257. AMP is bound at residue Gly200. (6S)-NADPHX is bound at residue Asp201.

Belongs to the NnrD/CARKD family. Homotetramer. It depends on Mg(2+) as a cofactor.

The catalysed reaction is (6S)-NADHX + ADP = AMP + phosphate + NADH + H(+). The enzyme catalyses (6S)-NADPHX + ADP = AMP + phosphate + NADPH + H(+). Functionally, catalyzes the dehydration of the S-form of NAD(P)HX at the expense of ADP, which is converted to AMP. Together with NAD(P)HX epimerase, which catalyzes the epimerization of the S- and R-forms, the enzyme allows the repair of both epimers of NAD(P)HX, a damaged form of NAD(P)H that is a result of enzymatic or heat-dependent hydration. This chain is ADP-dependent (S)-NAD(P)H-hydrate dehydratase, found in Haloterrigena turkmenica (strain ATCC 51198 / DSM 5511 / JCM 9101 / NCIMB 13204 / VKM B-1734 / 4k) (Halococcus turkmenicus).